A 140-amino-acid polypeptide reads, in one-letter code: Histone H2B (140 aa).

Residues 1–10 show a composition bias toward basic and acidic residues; it reads MPPKAAEKKP. A disordered region spans residues 1–48; it reads MPPKAAEKKPSTGGKAPAGKAPAEKKEAGKKTAAAASGEKKKRGKTRK. An N6-acetyllysine; alternate mark is found at lysine 8 and lysine 9. Glycyl lysine isopeptide (Lys-Gly) (interchain with G-Cter in SUMO); alternate cross-links involve residues lysine 8 and lysine 9. The segment covering 11–21 has biased composition (low complexity); that stretch reads STGGKAPAGKA. Position 15 is an N6-acetyllysine (lysine 15). N6-acetyllysine; alternate is present on lysine 25. Lysine 25 is covalently cross-linked (Glycyl lysine isopeptide (Lys-Gly) (interchain with G-Cter in SUMO); alternate). Residue lysine 26 forms a Glycyl lysine isopeptide (Lys-Gly) (interchain with G-Cter in SUMO) linkage. A Glycyl lysine isopeptide (Lys-Gly) (interchain with G-Cter in ubiquitin) cross-link involves residue lysine 134.

The protein belongs to the histone H2B family. The nucleosome is a histone octamer containing two molecules each of H2A, H2B, H3 and H4 assembled in one H3-H4 heterotetramer and two H2A-H2B heterodimers. The octamer wraps approximately 147 bp of DNA. In terms of processing, monoubiquitinated by the ubc2-bre1 complex to form H2BK123ub1. H2BK123ub1 gives a specific tag for epigenetic transcriptional activation and is also prerequisite for H3K4me and H3K79me formation. H2BK123ub1 also modulates the formation of double-strand breaks during meiosis and is a prerequisite for DNA-damage checkpoint activation. Post-translationally, acetylated by gcn5 to form H2BK11ac and H2BK16ac. H2BK16ac can also be formed by esa1. Acetylation of N-terminal lysines and particularly formation of H2BK11acK16ac has a positive effect on transcription. Sumoylation to form H2BK6su or H2BK7su, and probably also H2BK16su or H2BK17su, occurs preferentially near the telomeres and represses gene transcription.

The protein resides in the nucleus. The protein localises to the chromosome. Functionally, core component of nucleosome. Nucleosomes wrap and compact DNA into chromatin, limiting DNA accessibility to the cellular machineries which require DNA as a template. Histones thereby play a central role in transcription regulation, DNA repair, DNA replication and chromosomal stability. DNA accessibility is regulated via a complex set of post-translational modifications of histones, also called histone code, and nucleosome remodeling. The polypeptide is Histone H2B (htbA) (Emericella nidulans (strain FGSC A4 / ATCC 38163 / CBS 112.46 / NRRL 194 / M139) (Aspergillus nidulans)).